The following is a 466-amino-acid chain: 3-isopropylmalate dehydratase large subunit (466 aa).

[4Fe-4S] cluster contacts are provided by Cys-347, Cys-407, and Cys-410.

The protein belongs to the aconitase/IPM isomerase family. LeuC type 1 subfamily. In terms of assembly, heterodimer of LeuC and LeuD. [4Fe-4S] cluster serves as cofactor.

The enzyme catalyses (2R,3S)-3-isopropylmalate = (2S)-2-isopropylmalate. The protein operates within amino-acid biosynthesis; L-leucine biosynthesis; L-leucine from 3-methyl-2-oxobutanoate: step 2/4. Its function is as follows. Catalyzes the isomerization between 2-isopropylmalate and 3-isopropylmalate, via the formation of 2-isopropylmaleate. The protein is 3-isopropylmalate dehydratase large subunit of Escherichia coli O9:H4 (strain HS).